The sequence spans 349 residues: MLTERQELILKTIIMDFTQTHEPVGSKTVMNQLPIKVSSATIRNEMAVLEDQGLIEKTHSSSGRIPSSEGYRYYLDNLVEPLKLPESVYNTIGSQLDRPFHQVNEIVQEAARILSDLTNYTAFAEGPEKRDVKVTGFRIVPLSSRQVMAILVTSDGNVQNQVYALPHNIYGEEIEKAVHMINDQLVGKSLNEINVSLLSELAKSELGGEHVTELLSLVEDVLKDAASEQMYVDGQINLLNNTSEHNVKDIRSLYELIDHDNLFSNLMDSKADSKDKNYPIKVKLGSELPNDLLKNYSLLTAEYNVGSHGKGTIALLGPTNMPYSQMIGLLEYFRNELAKKLLDYYGKFQ.

The protein belongs to the HrcA family.

Negative regulator of class I heat shock genes (grpE-dnaK-dnaJ and groELS operons). Prevents heat-shock induction of these operons. In Lactobacillus acidophilus (strain ATCC 700396 / NCK56 / N2 / NCFM), this protein is Heat-inducible transcription repressor HrcA.